An 877-amino-acid polypeptide reads, in one-letter code: Leucine--tRNA ligase (877 aa).

A 'HIGH' region motif is present at residues 48 to 58 (PYPSGKLHMGH). The 'KMSKS' region motif lies at 636 to 640 (KMSKS). Lysine 639 serves as a coordination point for ATP.

Belongs to the class-I aminoacyl-tRNA synthetase family.

It localises to the cytoplasm. The enzyme catalyses tRNA(Leu) + L-leucine + ATP = L-leucyl-tRNA(Leu) + AMP + diphosphate. This chain is Leucine--tRNA ligase, found in Ralstonia nicotianae (strain ATCC BAA-1114 / GMI1000) (Ralstonia solanacearum).